The sequence spans 629 residues: Probable potassium transport system protein Kup 3 (629 aa).

12 helical membrane-spanning segments follow: residues 20 to 40 (LSLS…LYTF), 61 to 81 (VSLI…HFAL), 106 to 126 (PFII…GTIT), 143 to 163 (PSLK…LFAI), 171 to 191 (IGKA…ILGA), 209 to 229 (GLSF…GVFL), 253 to 273 (WFGL…ALVL), 291 to 311 (FLLP…QAII), 343 to 363 (IYIG…TIGF), 372 to 392 (AYGI…FIAL), 400 to 420 (IITS…FFAA), and 425 to 445 (FING…MMYI).

This sequence belongs to the HAK/KUP transporter (TC 2.A.72) family.

It is found in the cell inner membrane. The catalysed reaction is K(+)(in) + H(+)(in) = K(+)(out) + H(+)(out). Transport of potassium into the cell. Likely operates as a K(+):H(+) symporter. In Legionella pneumophila subsp. pneumophila (strain Philadelphia 1 / ATCC 33152 / DSM 7513), this protein is Probable potassium transport system protein Kup 3.